We begin with the raw amino-acid sequence, 130 residues long: Spore coat protein M (130 aa).

Its function is as follows. Involved in spore outer coat assembly. May be part of a cross-linked insoluble skeleton that surrounds the spore, serves as a matrix for the assembly of additional outer coat material, and confers structural stability to the final structure. The protein is Spore coat protein M (cotM) of Bacillus subtilis (strain 168).